The following is a 394-amino-acid chain: Elongation factor Tu (394 aa).

The tr-type G domain maps to 10 to 204 (KPHVNIGTIG…AVDSYIPQPV (195 aa)). The G1 stretch occupies residues 19–26 (GHVDHGKT). 19-26 (GHVDHGKT) is a binding site for GTP. Residue Thr26 participates in Mg(2+) binding. A G2 region spans residues 60-64 (GITIS). The G3 stretch occupies residues 81-84 (DCPG). GTP contacts are provided by residues 81-85 (DCPGH) and 136-139 (NKVD). Positions 136-139 (NKVD) are G4. Positions 174–176 (SAL) are G5.

Belongs to the TRAFAC class translation factor GTPase superfamily. Classic translation factor GTPase family. EF-Tu/EF-1A subfamily. Monomer.

It is found in the cytoplasm. It carries out the reaction GTP + H2O = GDP + phosphate + H(+). GTP hydrolase that promotes the GTP-dependent binding of aminoacyl-tRNA to the A-site of ribosomes during protein biosynthesis. The protein is Elongation factor Tu of Rickettsia massiliae (strain Mtu5).